The sequence spans 290 residues: UPF0761 membrane protein YihY (290 aa).

Transmembrane regions (helical) follow at residues 44–64 (LLSL…FPMF), 104–124 (VGAC…DSAL), 140–160 (FAVY…SLAI), 183–203 (VLPL…VPTT), 210–230 (AIVG…GFAL), and 244–264 (VLAV…IVLL).

Belongs to the UPF0761 family.

It localises to the cell inner membrane. The protein is UPF0761 membrane protein YihY of Salmonella arizonae (strain ATCC BAA-731 / CDC346-86 / RSK2980).